A 310-amino-acid chain; its full sequence is Olfactory receptor 5AR1 (310 aa).

Over 1–28 (MDKENSSMVTEFIFMGITQDPQMEIIFF) the chain is Extracellular. Asparagine 5 carries an N-linked (GlcNAc...) asparagine glycan. The chain crosses the membrane as a helical span at residues 29–49 (VVFLIVYLVNVVGNIGMIILI). Over 50–58 (TTDTQLHTP) the chain is Cytoplasmic. The chain crosses the membrane as a helical span at residues 59 to 79 (MYFFLCNLSFVDLGYSSAIAP). The Extracellular segment spans residues 80–100 (RMLADFLTNHKVISFSSCATQ). Cysteines 97 and 189 form a disulfide. Residues 101–120 (FAFFVGFVDAECYVLAAMAY) form a helical membrane-spanning segment. The Cytoplasmic segment spans residues 121 to 139 (GRFVAICRPLHYSTFMSKQ). A helical transmembrane segment spans residues 140–160 (VCLALMLGSYLAGLVSLVAHT). The Extracellular segment spans residues 161-205 (TLTFSLSYCGSNIINHFFCEIPPLLALSCSDTYISEILLFSLCGF). Residues 206–226 (IEFSTILIIFISYTFILVAII) form a helical membrane-spanning segment. The Cytoplasmic segment spans residues 227 to 239 (RMRSAEGRLKAFS). A helical transmembrane segment spans residues 240 to 260 (TCGSHLTGITLFYGTVMFMYL). The Extracellular segment spans residues 261–271 (RPTSSYSLDQD). The chain crosses the membrane as a helical span at residues 272-292 (KWASVFYTVIIPMLNPLIYSL). At 293 to 310 (RNKDVKAAFKKLIGKKSQ) the chain is on the cytoplasmic side.

This sequence belongs to the G-protein coupled receptor 1 family.

It localises to the cell membrane. Odorant receptor. This Homo sapiens (Human) protein is Olfactory receptor 5AR1.